Reading from the N-terminus, the 108-residue chain is UPF0145 protein Ava_0420 (108 aa).

Belongs to the UPF0145 family.

This is UPF0145 protein Ava_0420 from Trichormus variabilis (strain ATCC 29413 / PCC 7937) (Anabaena variabilis).